Consider the following 1138-residue polypeptide: uncharacterized protein (1138 aa).

An N-terminal signal peptide occupies residues 1–28 (MKLFPRSILIILVLSFALNLGLVTKTHA). 7 consecutive transmembrane segments (helical) span residues 331 to 351 (IVTA…LLAG), 359 to 379 (YINF…INIT), 392 to 412 (MIQW…SWVM), 494 to 514 (MLVS…AFMV), 520 to 540 (CMIS…MFLF), 554 to 574 (MISF…MFSV), and 699 to 719 (IKNI…MYNF). Gly residues predominate over residues 775 to 784 (DLKAGQGGGV). Disordered stretches follow at residues 775-914 (DLKA…KGTG), 958-977 (GGGR…RTNA), and 995-1071 (ERDN…KQIR). Low complexity predominate over residues 801 to 830 (AASGGTSAPTVTTPTASSSVATSSPKTVSS). Residues 838–852 (TPPPAPSEAVSPPPA) are compositionally biased toward pro residues. The span at 854 to 869 (IRTSISTPAPQSNIET) shows a compositional bias: polar residues. Basic and acidic residues-rich tracts occupy residues 875-888 (IIRD…KEID), 961-977 (RIRD…RTNA), 995-1032 (ERDN…RKEN), and 1058-1071 (LKEH…KQIR).

This sequence belongs to the TrbL/VirB6 family.

The protein localises to the cell membrane. This is an uncharacterized protein from Rickettsia felis (strain ATCC VR-1525 / URRWXCal2) (Rickettsia azadi).